We begin with the raw amino-acid sequence, 594 residues long: MSDSPAGSNPRTPESSGSGGGSSSGGGGGKRPAVPAVVSLLPPADPLRQANRLPIRVLKMLSAHTGHLLHPEYLQPLSSTPVSPIELDAKKSPLALLAQTCSQIGKPDPPPSSKLNSVAAAAANGLGSEKDPSRSAPGAASAAAALKQLGDSPAEDKSSFKPYSKGSGGGDSRKDSGSSSVSSTTSSSSSSPGDKAGFRVPSAACPPFPPHGASVSTSSNSSSPGGSRGGSPHHSDCKNGGGGAGELDKKEQEAKPSPEPAAGSRGSGGDSAHGGPEATASGRKSEPPSALVGAGHVAPVSPYKPGHSVFPLPPSSIGYHGSIVGAYAGYPSQFVPGLDPSKSGLVGGQLSGGLGLPPGKPPSSSPLTGASPPSFLQGLCRDPYCLGGYHSASHLGGSSCSTCSAHDPTGPSLKASGYPLVYPGHPLQPAALSSSAAQAALPGHPLYTYGFMLQNEPLPHSCNWVAASGPCDKRFATSEELLSHLRTHTALPGAEKLLAAYPGASSLGSAAAAAAAAASCHLHLPPPAAPGSPGSLSLRSPHTLGLSRYHPYGKSHLSTAGGLAVPSLPTAGPYYSPYALYGQRLASASALGYQ.

A compositionally biased stretch (polar residues) spans 1 to 14; that stretch reads MSDSPAGSNPRTPE. 3 disordered regions span residues 1 to 37, 100 to 298, and 345 to 370; these read MSDS…VPAV, TCSQ…GHVA, and LVGG…LTGA. S2 carries the post-translational modification N-acetylserine. Residues 17–30 show a composition bias toward gly residues; sequence GSGGGSSSGGGGGK. Composition is skewed to low complexity over residues 134–145, 177–191, and 212–225; these read RSAPGAASAAAA, GSSS…SSSS, and GASV…SSPG. The segment covering 246–256 has biased composition (basic and acidic residues); that stretch reads ELDKKEQEAKP. Residue S257 is modified to Phosphoserine. The span at 345–356 shows a compositional bias: gly residues; sequence LVGGQLSGGLGL. A C2H2-type zinc finger spans residues 460-488; that stretch reads HSCNWVAASGPCDKRFATSEELLSHLRTH. Residue R584 is modified to Omega-N-methylarginine.

It belongs to the Elbow/Noc family. Interacts with DCAF7 and PHB2. Interacts with TLE4; increases transcriptional repression. In terms of tissue distribution, expressed in mammary epithelium.

The protein localises to the nucleus. The protein resides in the cytoplasm. In terms of biological role, transcriptional corepressor which does not bind directly to DNA and may regulate transcription through recruitment of histone deacetylases to gene promoters. Regulates cell adhesion, migration and proliferation. May be required for segmental gene expression during hindbrain development. In Mus musculus (Mouse), this protein is Zinc finger protein 703 (Znf703).